A 160-amino-acid polypeptide reads, in one-letter code: 6,7-dimethyl-8-ribityllumazine synthase (160 aa).

5-amino-6-(D-ribitylamino)uracil-binding positions include Phe22, Thr57–Glu59, and Thr81–Ile83. Gln86–Thr87 lines the (2S)-2-hydroxy-3-oxobutyl phosphate pocket. Residue His89 is the Proton donor of the active site. Leu114 serves as a coordination point for 5-amino-6-(D-ribitylamino)uracil. Position 128 (Arg128) interacts with (2S)-2-hydroxy-3-oxobutyl phosphate.

This sequence belongs to the DMRL synthase family. Forms an icosahedral capsid composed of 60 subunits, arranged as a dodecamer of pentamers.

The enzyme catalyses (2S)-2-hydroxy-3-oxobutyl phosphate + 5-amino-6-(D-ribitylamino)uracil = 6,7-dimethyl-8-(1-D-ribityl)lumazine + phosphate + 2 H2O + H(+). Its pathway is cofactor biosynthesis; riboflavin biosynthesis; riboflavin from 2-hydroxy-3-oxobutyl phosphate and 5-amino-6-(D-ribitylamino)uracil: step 1/2. Its function is as follows. Catalyzes the formation of 6,7-dimethyl-8-ribityllumazine by condensation of 5-amino-6-(D-ribitylamino)uracil with 3,4-dihydroxy-2-butanone 4-phosphate. This is the penultimate step in the biosynthesis of riboflavin. This Buchnera aphidicola subsp. Acyrthosiphon pisum (strain Tuc7) protein is 6,7-dimethyl-8-ribityllumazine synthase.